The chain runs to 512 residues: Solute carrier family 40 member 2 (512 aa).

The tract at residues 1 to 28 (MEEETETRVFLSNEQHQEEEEEEEEEPS) is disordered. Residues 17-27 (QEEEEEEEEEP) are compositionally biased toward acidic residues. The next 11 helical transmembrane spans lie at 55-75 (VALYMIYLWPNSLFLTAMYGV), 105-125 (LVTQNLSFIVAGGAVVALLVV), 133-153 (FPVFATLVVLTNLSGAIGVLS), 187-207 (GIDLSSKLLSPVITGLIISFV), 214-234 (ITFAAWATITVWIEYWLFISV), 310-330 (IVLPGVSLALLFFTVLSFGTL), 343-363 (YIIGIGRGISAGVGLAATVLY), 376-396 (GVWSFWSQWTCLLVCVGSIWV), 405-425 (MLMAGVAASRLGLWMFDLAVI), 442-462 (GVQNSLQSALDLMANLLGIIV), and 468-488 (FWMLTLISFATVSLAGILYTI).

Belongs to the ferroportin (FP) (TC 2.A.100) family. SLC40A subfamily.

Its subcellular location is the vacuole membrane. Its function is as follows. Vacuolar transporter that is involved in the transport of excess nickel into the vacuole under iron deficiency, increasing cellular tolerance to nickel under iron deficiency stress response. In Arabidopsis thaliana (Mouse-ear cress), this protein is Solute carrier family 40 member 2 (IREG2).